The chain runs to 352 residues: DNA integrity scanning protein DisA (352 aa).

Residues 3–143 enclose the DAC domain; that stretch reads PQELIEKIKL…NYKYVVNQVD (141 aa). Residues Gly-71, Leu-89, and 102–106 contribute to the ATP site; that span reads TRHRT.

Belongs to the DisA family. In terms of assembly, homooctamer. Mg(2+) is required as a cofactor.

The catalysed reaction is 2 ATP = 3',3'-c-di-AMP + 2 diphosphate. In terms of biological role, participates in a DNA-damage check-point. DisA forms globular foci that rapidly scan along the chromosomes searching for lesions. Functionally, also has diadenylate cyclase activity, catalyzing the condensation of 2 ATP molecules into cyclic di-AMP (c-di-AMP). c-di-AMP likely acts as a signaling molecule that may couple DNA integrity with a cellular process. The protein is DNA integrity scanning protein DisA of Thermotoga petrophila (strain ATCC BAA-488 / DSM 13995 / JCM 10881 / RKU-1).